Consider the following 294-residue polypeptide: tRNA dimethylallyltransferase (294 aa).

Position 9 to 16 (9 to 16 (GATATGKS)) interacts with ATP. 11–16 (TATGKS) provides a ligand contact to substrate. Residues 34–37 (DSRQ) are interaction with substrate tRNA.

It belongs to the IPP transferase family. As to quaternary structure, monomer. Mg(2+) serves as cofactor.

The enzyme catalyses adenosine(37) in tRNA + dimethylallyl diphosphate = N(6)-dimethylallyladenosine(37) in tRNA + diphosphate. Functionally, catalyzes the transfer of a dimethylallyl group onto the adenine at position 37 in tRNAs that read codons beginning with uridine, leading to the formation of N6-(dimethylallyl)adenosine (i(6)A). The sequence is that of tRNA dimethylallyltransferase from Trichormus variabilis (strain ATCC 29413 / PCC 7937) (Anabaena variabilis).